Consider the following 517-residue polypeptide: Ribonuclease Y (517 aa).

A helical membrane pass occupies residues 1 to 21 (MIESLIALIAAIVGLGIGYLV). The region spanning 207 to 273 (LINVINIKND…TKVIELLVED (67 aa)) is the KH domain. Residues 333–426 (ALAHSLEVAH…VCAADTLSAA (94 aa)) form the HD domain.

Belongs to the RNase Y family.

The protein resides in the cell membrane. In terms of biological role, endoribonuclease that initiates mRNA decay. The polypeptide is Ribonuclease Y (Campylobacter jejuni subsp. doylei (strain ATCC BAA-1458 / RM4099 / 269.97)).